The following is a 378-amino-acid chain: Erythronate-4-phosphate dehydrogenase (378 aa).

Ser-45 and Thr-66 together coordinate substrate. Asp-142 and Thr-169 together coordinate NAD(+). Arg-202 is an active-site residue. Asp-226 is an NAD(+) binding site. Glu-231 is a catalytic residue. His-248 serves as the catalytic Proton donor. Gly-251 serves as a coordination point for NAD(+). A substrate-binding site is contributed by Tyr-252.

The protein belongs to the D-isomer specific 2-hydroxyacid dehydrogenase family. PdxB subfamily. Homodimer.

It is found in the cytoplasm. The catalysed reaction is 4-phospho-D-erythronate + NAD(+) = (R)-3-hydroxy-2-oxo-4-phosphooxybutanoate + NADH + H(+). The protein operates within cofactor biosynthesis; pyridoxine 5'-phosphate biosynthesis; pyridoxine 5'-phosphate from D-erythrose 4-phosphate: step 2/5. Catalyzes the oxidation of erythronate-4-phosphate to 3-hydroxy-2-oxo-4-phosphonooxybutanoate. In Cellvibrio japonicus (strain Ueda107) (Pseudomonas fluorescens subsp. cellulosa), this protein is Erythronate-4-phosphate dehydrogenase.